Consider the following 220-residue polypeptide: Grancalcin (220 aa).

EF-hand domains are found at residues 51–86, 92–127, 122–157, and 158–193; these read SPADDSMWTYFTAVAGQDGEVDAEELQRCLTQSGIS, FSLETCRIMIAMLDRDYTGKMGFNEFKELWAALNAW, AALNAWKQNFMTIDQDQSGTVEHHELSQAIALMGYR, and LSPQTLAAIVRRYSKNGRIFFDDYVACCVKLRALTD. Residues Asp-105, Asp-107, Thr-109, Lys-111, Glu-116, Asp-135, Asp-137, Ser-139, Thr-141, and Glu-146 each coordinate Ca(2+).

As to quaternary structure, homodimer. Interacts with SRI and LCP1.

Its subcellular location is the cytoplasm. It localises to the cytoplasmic granule membrane. Calcium-binding protein that may play a role in the adhesion of neutrophils to fibronectin. May play a role in the formation of focal adhesions. This is Grancalcin (Gca) from Mus musculus (Mouse).